The sequence spans 913 residues: Protein translocase subunit SecA (913 aa).

ATP contacts are provided by residues Gln-87, 105–109 (GEGKT), and Asp-512. Zn(2+)-binding residues include Cys-897, Cys-899, Cys-908, and His-909.

It belongs to the SecA family. As to quaternary structure, monomer and homodimer. Part of the essential Sec protein translocation apparatus which comprises SecA, SecYEG and auxiliary proteins SecDF-YajC and YidC. The cofactor is Zn(2+).

The protein resides in the cell inner membrane. It is found in the cytoplasm. The catalysed reaction is ATP + H2O + cellular proteinSide 1 = ADP + phosphate + cellular proteinSide 2.. In terms of biological role, part of the Sec protein translocase complex. Interacts with the SecYEG preprotein conducting channel. Has a central role in coupling the hydrolysis of ATP to the transfer of proteins into and across the cell membrane, serving both as a receptor for the preprotein-SecB complex and as an ATP-driven molecular motor driving the stepwise translocation of polypeptide chains across the membrane. The chain is Protein translocase subunit SecA from Pseudomonas savastanoi pv. phaseolicola (strain 1448A / Race 6) (Pseudomonas syringae pv. phaseolicola (strain 1448A / Race 6)).